Reading from the N-terminus, the 864-residue chain is Leucine--tRNA ligase (864 aa).

Positions 42 to 52 (PYPSGKLHMGH) match the 'HIGH' region motif. The 'KMSKS' region signature appears at 622-626 (KMSKS). Residue K625 coordinates ATP.

Belongs to the class-I aminoacyl-tRNA synthetase family.

It localises to the cytoplasm. The enzyme catalyses tRNA(Leu) + L-leucine + ATP = L-leucyl-tRNA(Leu) + AMP + diphosphate. The polypeptide is Leucine--tRNA ligase (Cellvibrio japonicus (strain Ueda107) (Pseudomonas fluorescens subsp. cellulosa)).